The sequence spans 329 residues: Transmembrane protein I329L (329 aa).

An N-terminal signal peptide occupies residues 1 to 31 (MLRVFIFFVFLGSGLTGRIKPQVTCKYFISE). Residues Asn32, Asn39, Asn44, Asn76, Asn82, and Asn101 are each glycosylated (N-linked (GlcNAc...) asparagine; by host). Topologically, residues 32-239 (NNTWYKYNVT…NTERYKSCYP (208 aa)) are extracellular. The stretch at 112-133 (ELKFLDLRYNDLQVIDYNILRK) is one LRR repeat. Asn185 and Asn219 each carry an N-linked (GlcNAc...) asparagine; by host glycan. Cysteines 195 and 237 form a disulfide. Residues 240–260 (LVFISILCSCISFLFLFICLL) form a helical membrane-spanning segment. Residues 261 to 329 (RSICKKYSCT…EKKVSCSRRK (69 aa)) lie on the Cytoplasmic side of the membrane.

The protein belongs to the asfivirus I329L family. Highly glycosylated.

It is found in the host endoplasmic reticulum membrane. The protein resides in the host Golgi apparatus membrane. In terms of biological role, viral TLR3 homolog that probably prevents TLR3 dimerization and subsequent induction of IFN. Inhibits dsRNA-stimulated activation of NF-kB and IRF3. In Ornithodoros (relapsing fever ticks), this protein is Transmembrane protein I329L.